We begin with the raw amino-acid sequence, 2078 residues long: Autophagy-related protein 2 homolog B (2078 aa).

Positions 13–108 (ACRYLLQRYL…EMVFRPRPRP (96 aa)) constitute a Chorein N-terminal domain. A phosphoserine mark is found at Ser-255 and Ser-379. A disordered region spans residues 473 to 495 (GSTFPSNLVHPTPLQKTSLPSRS). Residues 486 to 495 (LQKTSLPSRS) are compositionally biased toward polar residues. Phosphoserine occurs at positions 497, 840, 886, 899, and 1008. The disordered stretch occupies residues 868-888 (EEEENDGHYQEEEEGGAHSLK). A compositionally biased stretch (basic and acidic residues) spans 873-888 (DGHYQEEEEGGAHSLK). Tyr-1012 bears the Phosphotyrosine mark. 2 positions are modified to phosphoserine: Ser-1016 and Ser-1018. The residue at position 1022 (Thr-1022) is a Phosphothreonine. A disordered region spans residues 1375 to 1405 (ADMKPGAFQRRSKVDSSGRSSSRGPVLPEAD). Ser-1526 is modified (phosphoserine).

It belongs to the ATG2 family. Interacts with WDR45/WIPI4.

It localises to the preautophagosomal structure membrane. It is found in the lipid droplet. Its subcellular location is the endoplasmic reticulum membrane. The enzyme catalyses a 1,2-diacyl-sn-glycero-3-phospho-L-serine(in) = a 1,2-diacyl-sn-glycero-3-phospho-L-serine(out). It carries out the reaction a 1,2-diacyl-sn-glycero-3-phosphoethanolamine(in) = a 1,2-diacyl-sn-glycero-3-phosphoethanolamine(out). In terms of biological role, lipid transfer protein required for both autophagosome formation and regulation of lipid droplet morphology and dispersion. Tethers the edge of the isolation membrane (IM) to the endoplasmic reticulum (ER) and mediates direct lipid transfer from ER to IM for IM expansion. Binds to the ER exit site (ERES), which is the membrane source for autophagosome formation, and extracts phospholipids from the membrane source and transfers them to ATG9 (ATG9A or ATG9B) to the IM for membrane expansion. Lipid transfer activity is enhanced by WDR45/WIPI4, which promotes ATG2B-association with phosphatidylinositol 3-monophosphate (PI3P)-containing membranes. The chain is Autophagy-related protein 2 homolog B from Homo sapiens (Human).